The chain runs to 173 residues: Large ribosomal subunit protein uL10 (173 aa).

This sequence belongs to the universal ribosomal protein uL10 family. In terms of assembly, part of the ribosomal stalk of the 50S ribosomal subunit. The N-terminus interacts with L11 and the large rRNA to form the base of the stalk. The C-terminus forms an elongated spine to which L12 dimers bind in a sequential fashion forming a multimeric L10(L12)X complex.

Its function is as follows. Forms part of the ribosomal stalk, playing a central role in the interaction of the ribosome with GTP-bound translation factors. The chain is Large ribosomal subunit protein uL10 from Chlorobaculum parvum (strain DSM 263 / NCIMB 8327) (Chlorobium vibrioforme subsp. thiosulfatophilum).